The following is a 156-amino-acid chain: Large ribosomal subunit protein eL24 (156 aa).

Positions 110–129 (KESKAKKQETQAAKKAEKAK) are enriched in basic and acidic residues. Positions 110 to 156 (KESKAKKQETQAAKKAEKAKNAANPKARVTSKQGAKGAPVKVAAKSR) are disordered. Over residues 130 to 156 (NAANPKARVTSKQGAKGAPVKVAAKSR) the composition is skewed to low complexity.

It belongs to the eukaryotic ribosomal protein eL24 family. In terms of assembly, component of the large ribosomal subunit (LSU). Mature N.crassa ribosomes consist of a small (40S) and a large (60S) subunit. The 40S small subunit contains 1 molecule of ribosomal RNA (18S rRNA) and at least 32 different proteins. The large 60S subunit contains 3 rRNA molecules (26S, 5.8S and 5S rRNA) and at least 42 different proteins.

Its subcellular location is the cytoplasm. Component of the ribosome, a large ribonucleoprotein complex responsible for the synthesis of proteins in the cell. The small ribosomal subunit (SSU) binds messenger RNAs (mRNAs) and translates the encoded message by selecting cognate aminoacyl-transfer RNA (tRNA) molecules. The large subunit (LSU) contains the ribosomal catalytic site termed the peptidyl transferase center (PTC), which catalyzes the formation of peptide bonds, thereby polymerizing the amino acids delivered by tRNAs into a polypeptide chain. The nascent polypeptides leave the ribosome through a tunnel in the LSU and interact with protein factors that function in enzymatic processing, targeting, and the membrane insertion of nascent chains at the exit of the ribosomal tunnel. The polypeptide is Large ribosomal subunit protein eL24 (rpl-24) (Neurospora crassa (strain ATCC 24698 / 74-OR23-1A / CBS 708.71 / DSM 1257 / FGSC 987)).